Reading from the N-terminus, the 503-residue chain is Cobyric acid synthase (503 aa).

Residues 255-444 (AIDVAVIRCP…MHDLFHNDAF (190 aa)) enclose the GATase cobBQ-type domain. Cys337 serves as the catalytic Nucleophile. His436 is an active-site residue.

This sequence belongs to the CobB/CobQ family. CobQ subfamily.

The protein operates within cofactor biosynthesis; adenosylcobalamin biosynthesis. Functionally, catalyzes amidations at positions B, D, E, and G on adenosylcobyrinic A,C-diamide. NH(2) groups are provided by glutamine, and one molecule of ATP is hydrogenolyzed for each amidation. In Geobacillus kaustophilus (strain HTA426), this protein is Cobyric acid synthase.